Consider the following 625-residue polypeptide: Beta-galactosidase large subunit (625 aa).

Glu465 (proton donor) is an active-site residue. Glu533 functions as the Nucleophile in the catalytic mechanism.

The protein belongs to the glycosyl hydrolase 2 family. In terms of assembly, heterodimer of a large (LacL) and a small subunit (LacM).

It catalyses the reaction Hydrolysis of terminal non-reducing beta-D-galactose residues in beta-D-galactosides.. Its function is as follows. Component of a beta-galactosidase. The protein is Beta-galactosidase large subunit of Latilactobacillus sakei (Lactobacillus sakei).